A 150-amino-acid chain; its full sequence is Large ribosomal subunit protein bL9 (150 aa).

It belongs to the bacterial ribosomal protein bL9 family.

In terms of biological role, binds to the 23S rRNA. This chain is Large ribosomal subunit protein bL9, found in Renibacterium salmoninarum (strain ATCC 33209 / DSM 20767 / JCM 11484 / NBRC 15589 / NCIMB 2235).